A 94-amino-acid polypeptide reads, in one-letter code: Transcription factor CPC (94 aa).

The S1, required for cell-to-cell movements stretch occupies residues 1–10; sequence MFRSDKAEKM. Positions 1–11 are enriched in basic and acidic residues; that stretch reads MFRSDKAEKMD. Positions 1-25 are disordered; it reads MFRSDKAEKMDKRRRRQSKAKASCS. The region spanning 30–80 is the Myb-like domain; that stretch reads SIEWEAVKMSEEEEDLISRMYKLVGDRWELIAGRIPGRTPEEIERYWLMKH. An S2, required for cell-to-cell movements and nuclear localization region spans residues 76–79; it reads WLMK.

In terms of assembly, interacts with GL3 and BHLH2. Interacts with SIEL. Expressed in trichomes and in young developing leaves, as well as in root hair and stele cells (pericycle and vascular tissues). Expressed in epidermal root hairless cells (atrichoblasts) and moves to root hair cells (trichoblasts) by a cell-to-cell movement through plasmodesmata (at protein level).

Its subcellular location is the nucleus. Transcription factor. Determines the fate of epidermal cell differentiation. Represses trichome development by lateral inhibition. Together with GL3 or BHLH2, promotes the formation of hair developing cells (H position) in root epidermis, probably by inhibiting non-hair cell formation. Represses the expression of GL2 and WER in H cells. Positively regulates stomatal formation in the hypocotyl. The protein is Transcription factor CPC (CPC) of Arabidopsis thaliana (Mouse-ear cress).